A 408-amino-acid polypeptide reads, in one-letter code: LL-diaminopimelate aminotransferase (408 aa).

Substrate contacts are provided by Tyr-15 and Gly-42. Pyridoxal 5'-phosphate contacts are provided by residues Tyr-72, 108-109 (SK), Tyr-132, Asn-187, Tyr-218, and 246-248 (SFS). Lys-109, Tyr-132, and Asn-187 together coordinate substrate. Lys-249 carries the post-translational modification N6-(pyridoxal phosphate)lysine. Positions 257 and 292 each coordinate pyridoxal 5'-phosphate. Positions 292 and 388 each coordinate substrate.

It belongs to the class-I pyridoxal-phosphate-dependent aminotransferase family. LL-diaminopimelate aminotransferase subfamily. Homodimer. Requires pyridoxal 5'-phosphate as cofactor.

The catalysed reaction is (2S,6S)-2,6-diaminopimelate + 2-oxoglutarate = (S)-2,3,4,5-tetrahydrodipicolinate + L-glutamate + H2O + H(+). Its pathway is amino-acid biosynthesis; L-lysine biosynthesis via DAP pathway; LL-2,6-diaminopimelate from (S)-tetrahydrodipicolinate (aminotransferase route): step 1/1. Involved in the synthesis of meso-diaminopimelate (m-DAP or DL-DAP), required for both lysine and peptidoglycan biosynthesis. Catalyzes the direct conversion of tetrahydrodipicolinate to LL-diaminopimelate. The sequence is that of LL-diaminopimelate aminotransferase from Leptospira borgpetersenii serovar Hardjo-bovis (strain JB197).